The primary structure comprises 152 residues: Regulatory protein RecX (152 aa).

The protein belongs to the RecX family.

Its subcellular location is the cytoplasm. Functionally, modulates RecA activity. This chain is Regulatory protein RecX, found in Chromobacterium violaceum (strain ATCC 12472 / DSM 30191 / JCM 1249 / CCUG 213 / NBRC 12614 / NCIMB 9131 / NCTC 9757 / MK).